A 385-amino-acid polypeptide reads, in one-letter code: 1-deoxy-D-xylulose 5-phosphate reductoisomerase (385 aa).

NADPH-binding residues include S10, G11, S12, I13, G36, N38, and N124. K125 contacts 1-deoxy-D-xylulose 5-phosphate. Position 126 (E126) interacts with NADPH. Mn(2+) is bound at residue D150. Residues S151, E152, S176, and H198 each coordinate 1-deoxy-D-xylulose 5-phosphate. E152 contacts Mn(2+). G204 lines the NADPH pocket. Residues S211, N216, K217, and E220 each coordinate 1-deoxy-D-xylulose 5-phosphate. E220 lines the Mn(2+) pocket.

This sequence belongs to the DXR family. The cofactor is Mg(2+). Requires Mn(2+) as cofactor.

It catalyses the reaction 2-C-methyl-D-erythritol 4-phosphate + NADP(+) = 1-deoxy-D-xylulose 5-phosphate + NADPH + H(+). Its pathway is isoprenoid biosynthesis; isopentenyl diphosphate biosynthesis via DXP pathway; isopentenyl diphosphate from 1-deoxy-D-xylulose 5-phosphate: step 1/6. Functionally, catalyzes the NADPH-dependent rearrangement and reduction of 1-deoxy-D-xylulose-5-phosphate (DXP) to 2-C-methyl-D-erythritol 4-phosphate (MEP). The sequence is that of 1-deoxy-D-xylulose 5-phosphate reductoisomerase from Endomicrobium trichonymphae.